The primary structure comprises 638 residues: MSKPPPQHQSKNANNSLSSPVSDKQSNDSRQLLLAHLYNYFKTNGLEETAQALLIECNNTIPKATTNSKGYSLDNSGPDQKDTFLDQWWGLLWSIQSSINPNLNQMTNPSGILTPQHQMIVQQRMLQQQQQQAQQQQQQAQQQQAQQQQQQQQLLQQQRLQQQAMIQQQHQQQLINNLSARQQQVGLSTTTNQMGPPGSNSNNLQSNMSPNNEQLQSQARLQQLKLQFQQQQQQQLQQQQQQLQLQQQQQQQQQQQQQQQQQQQQQQRQQQRQRQKKFQRQLSTSSQKSPVINNGQPQQQLQQDQRPASAPQNQPTPGNNNNNNNNTNAVSPKLHRQSVDDYQMNLLQMENQNNSQRQKYLNNQQTRNSQQQQQQQQSQSQSQQSSPFQPPAQQPKNSTTTSTNTTTSRAQKSSRKQQPKNSRRQSVQQQQQQQPQQQPQQSQQMSTSSQSFTAANNSNNVNNTFDISPQIQDQGMLSTKEQQQQPQQPQPQPQSQPQSQSQSLPSNNNNNNNNKQDVVNVVFDDAFFSGNLLLDDFNEFANSTSNNGNGNGNNDMNSQFNNTQTERIMFSMPPNQNQNQFPSQSGDGGGGGGGSMQPNFFEGIELGDGNNSGNGDDDDAPIITTDWLSSMGSGPGYE.

The disordered stretch occupies residues Met-1–Ser-26. Positions His-8 to Ser-26 are enriched in polar residues. Residues Ser-29–Ile-61 form the LisH domain. Disordered regions lie at residues Leu-187 to Gln-216, Gln-270 to Ser-331, Asn-362 to Lys-515, and Met-572 to Glu-638. Residues Ser-283–Gly-295 show a composition bias toward polar residues. 3 stretches are compositionally biased toward low complexity: residues Gln-296 to Asn-328, Ser-369 to Pro-387, and Gln-394 to Ser-408. Residues Lys-412 to Arg-423 are compositionally biased toward basic residues. The span at Gln-425–Phe-465 shows a compositional bias: low complexity. The segment covering Asp-466–Glu-481 has biased composition (polar residues). Composition is skewed to low complexity over residues Ser-495–Lys-515 and Met-572–Ser-585. Residues Gly-586–Ser-595 are compositionally biased toward gly residues.

The protein belongs to the MSS11 family. Interacts with FLO8.

It localises to the cytoplasm. Its subcellular location is the nucleus. Its function is as follows. Transcription factor that regulates pseudohyphal differentiation, invasive growth, floculation, adhesion and starch metabolism in response to nutrient availability. In Candida albicans (strain SC5314 / ATCC MYA-2876) (Yeast), this protein is Transcription activator MSS11 (MSS11).